We begin with the raw amino-acid sequence, 103 residues long: Cell division protein FtsB (103 aa).

The Cytoplasmic portion of the chain corresponds to 1–3 (MGK). The helical transmembrane segment at 4–21 (LTLLLLALLVWLQYSLWF) threads the bilayer. Over 22–103 (GKNGIHDYSR…RAATAGQTHR (82 aa)) the chain is Periplasmic. Residues 33 to 62 (NDDVVAQQATNAKLKARNDQLFAEIDDLNG) adopt a coiled-coil conformation.

The protein belongs to the FtsB family. As to quaternary structure, part of a complex composed of FtsB, FtsL and FtsQ.

The protein localises to the cell inner membrane. Essential cell division protein. May link together the upstream cell division proteins, which are predominantly cytoplasmic, with the downstream cell division proteins, which are predominantly periplasmic. This is Cell division protein FtsB from Salmonella agona (strain SL483).